Here is a 327-residue protein sequence, read N- to C-terminus: Elongation factor P--(R)-beta-lysine ligase (327 aa).

78–80 (SPE) contributes to the substrate binding site. ATP-binding positions include 102-104 (RNQ) and Asn-111. Substrate is bound at residue Tyr-120. 246-247 (EL) contacts ATP. Glu-253 contacts substrate. Gly-302 contacts ATP.

It belongs to the class-II aminoacyl-tRNA synthetase family. EpmA subfamily. As to quaternary structure, homodimer.

The enzyme catalyses D-beta-lysine + L-lysyl-[protein] + ATP = N(6)-((3R)-3,6-diaminohexanoyl)-L-lysyl-[protein] + AMP + diphosphate + H(+). With EpmB is involved in the beta-lysylation step of the post-translational modification of translation elongation factor P (EF-P). Catalyzes the ATP-dependent activation of (R)-beta-lysine produced by EpmB, forming a lysyl-adenylate, from which the beta-lysyl moiety is then transferred to the epsilon-amino group of a conserved specific lysine residue in EF-P. This is Elongation factor P--(R)-beta-lysine ligase from Baumannia cicadellinicola subsp. Homalodisca coagulata.